A 227-amino-acid polypeptide reads, in one-letter code: Ribonuclease 3 (227 aa).

The RNase III domain maps to 4–133 (FEKLEKLLSY…LIAAIYLDSN (130 aa)). Residue Glu46 participates in Mg(2+) binding. Asp50 is a catalytic residue. The Mg(2+) site is built by Asn119 and Glu122. The active site involves Glu122. A DRBM domain is found at 158–226 (DPKTALQEWA…ARSLLHRLKN (69 aa)).

Belongs to the ribonuclease III family. As to quaternary structure, homodimer. Mg(2+) serves as cofactor.

The protein localises to the cytoplasm. The enzyme catalyses Endonucleolytic cleavage to 5'-phosphomonoester.. Functionally, digests double-stranded RNA. Involved in the processing of primary rRNA transcript to yield the immediate precursors to the large and small rRNAs (23S and 16S). Processes some mRNAs, and tRNAs when they are encoded in the rRNA operon. Processes pre-crRNA and tracrRNA of type II CRISPR loci if present in the organism. This Rickettsia africae (strain ESF-5) protein is Ribonuclease 3.